The sequence spans 71 residues: Protein translocase subunit SecE (71 aa).

The chain crosses the membrane as a helical span at residues 43–63; the sequence is VAGAGILAVGAVGFIIYVLLT.

Belongs to the SecE/SEC61-gamma family. Component of the Sec protein translocase complex. Heterotrimer consisting of SecY (alpha), SecG (beta) and SecE (gamma) subunits. The heterotrimers can form oligomers, although 1 heterotrimer is thought to be able to translocate proteins. Interacts with the ribosome. May interact with SecDF, and other proteins may be involved.

Its subcellular location is the cell membrane. Essential subunit of the Sec protein translocation channel SecYEG. Clamps together the 2 halves of SecY. May contact the channel plug during translocation. This is Protein translocase subunit SecE from Methanosarcina mazei (strain ATCC BAA-159 / DSM 3647 / Goe1 / Go1 / JCM 11833 / OCM 88) (Methanosarcina frisia).